The following is a 473-amino-acid chain: 6-phospho-beta-glucosidase (473 aa).

Catalysis depends on Glu-174, which acts as the Proton donor. The active-site Nucleophile is the Glu-366.

It belongs to the glycosyl hydrolase 1 family.

The enzyme catalyses 6-phospho-beta-D-glucosyl-(1-&gt;4)-D-glucose + H2O = D-glucose 6-phosphate + D-glucose. This chain is 6-phospho-beta-glucosidase (abgA), found in Clostridium longisporum.